The following is a 129-amino-acid chain: Protein Turandot B2 (129 aa).

The signal sequence occupies residues 1–21; that stretch reads MNSATSLMCFALLLISPLCMG.

This sequence belongs to the Turandot family.

The protein resides in the secreted. Its function is as follows. A humoral factor that may play a role in stress tolerance. In Drosophila erecta (Fruit fly), this protein is Protein Turandot B2 (TotB2).